We begin with the raw amino-acid sequence, 147 residues long: Transcriptional repressor NrdR (147 aa).

Residues 3–34 (CPYCGNVETTVVETRESDEGDAVRRRRRCSAC) fold into a zinc finger. The region spanning 49–139 (PAVVKKNGDR…VYREFEDIDA (91 aa)) is the ATP-cone domain.

Belongs to the NrdR family. Zn(2+) serves as cofactor.

Functionally, negatively regulates transcription of bacterial ribonucleotide reductase nrd genes and operons by binding to NrdR-boxes. The sequence is that of Transcriptional repressor NrdR from Leptothrix cholodnii (strain ATCC 51168 / LMG 8142 / SP-6) (Leptothrix discophora (strain SP-6)).